The primary structure comprises 315 residues: Methionyl-tRNA formyltransferase (315 aa).

Residue 113–116 (SLLP) coordinates (6S)-5,6,7,8-tetrahydrofolate.

The protein belongs to the Fmt family.

It catalyses the reaction L-methionyl-tRNA(fMet) + (6R)-10-formyltetrahydrofolate = N-formyl-L-methionyl-tRNA(fMet) + (6S)-5,6,7,8-tetrahydrofolate + H(+). Functionally, attaches a formyl group to the free amino group of methionyl-tRNA(fMet). The formyl group appears to play a dual role in the initiator identity of N-formylmethionyl-tRNA by promoting its recognition by IF2 and preventing the misappropriation of this tRNA by the elongation apparatus. This Salmonella gallinarum (strain 287/91 / NCTC 13346) protein is Methionyl-tRNA formyltransferase.